The chain runs to 279 residues: MTKFRGCIDIHSGQVKQIVGGTLTQDDSASSKTSSAKENFVSTKPSSHYAQLYKDYNVKGCHVIKLGSNPANDDAAKLALSTWPHNLQVGGGINLDNAQYWLDQGASHVILTSWLFTKNEQDKMELDFGKLREISKLIGKEKLIVDLSCRTVIENGKTNWYVAMNKWQTITDTILSAEFLLKVSAYCDEFLIHAADVEGLCKGIDEKLVENLGEWCPVGFEEKIVYAGGAKSINDLDTVAKLSKGKVDLTYGSSLDIFSGKLVNFTDLVEWNKANSKTN.

The protein belongs to the HisA/HisF family.

The protein localises to the cytoplasm. It catalyses the reaction 1-(5-phospho-beta-D-ribosyl)-5-[(5-phospho-beta-D-ribosylamino)methylideneamino]imidazole-4-carboxamide = 5-[(5-phospho-1-deoxy-D-ribulos-1-ylimino)methylamino]-1-(5-phospho-beta-D-ribosyl)imidazole-4-carboxamide. It functions in the pathway amino-acid biosynthesis; L-histidine biosynthesis; L-histidine from 5-phospho-alpha-D-ribose 1-diphosphate: step 4/9. The polypeptide is 1-(5-phosphoribosyl)-5-[(5-phosphoribosylamino)methylideneamino] imidazole-4-carboxamide isomerase (HIS6) (Candida albicans (Yeast)).